A 176-amino-acid chain; its full sequence is Heme oxygenase HutZ (176 aa).

Histidine 170 is a heme binding site.

The protein belongs to the heme oxygenase HugZ/HutZ family. As to quaternary structure, homodimer. Interacts with HutX, leading to the transfer of the heme from HutX to apo-HutZ.

The catalysed reaction is heme b + 3 AH2 + 3 O2 + 2 H(+) = biliverdin IXbeta + CO + Fe(2+) + 3 A + 3 H2O. It carries out the reaction heme b + 3 AH2 + 3 O2 + 3 H(+) = biliverdin IXdelta + CO + Fe(2+) + 3 A + 3 H2O. With respect to regulation, activity is pH-dependent. A proximal hydrogen bond between Asp-132 and the heme axial ligant His-170 is essential for heme degradation activity. Heme-degradation reaction is inhibited by iron chelators. In terms of biological role, involved in heme degradation. Catalyzes the degradation of heme to biliverdin, with the release of iron. Forms biliverdin beta and delta. Binds heme with high efficiency. The polypeptide is Heme oxygenase HutZ (Vibrio cholerae serotype O1 (strain ATCC 39315 / El Tor Inaba N16961)).